A 230-amino-acid polypeptide reads, in one-letter code: CRP-like protein Clp (230 aa).

18–139 (PSLTLDAGTI…APRILYAIGV (122 aa)) contributes to the a nucleoside 3',5'-cyclic phosphate binding site. The HTH crp-type domain maps to 158-230 (LDVTDRIVRT…GKTVVLYGTR (73 aa)). The H-T-H motif DNA-binding region spans 190–209 (RQELARLVGCSREMAGRVLK).

In terms of assembly, homodimer.

The protein localises to the cytoplasm. Allosterically inhibited by cyclic di-GMP (c-di-GMP), which binds to Clp and abolishes its ability to bind its target gene promoter. In terms of biological role, global transcriptional regulator that regulates virulence factors production by activating or repressing the expression of a large set of genes in diffusible signal factor (DSF) pathway. The sequence is that of CRP-like protein Clp (clp) from Xanthomonas campestris pv. campestris (strain 8004).